Reading from the N-terminus, the 588-residue chain is Aspartate--tRNA ligase (588 aa).

Position 172 (glutamate 172) interacts with L-aspartate. Residues glutamine 196–lysine 199 are aspartate. Position 218 (arginine 218) interacts with L-aspartate. Residues arginine 218 to glutamate 220 and glutamine 227 contribute to the ATP site. Histidine 449 is a binding site for L-aspartate. Glutamate 483 contacts ATP. Position 490 (arginine 490) interacts with L-aspartate. Glycine 535–arginine 538 lines the ATP pocket.

The protein belongs to the class-II aminoacyl-tRNA synthetase family. Type 1 subfamily. In terms of assembly, homodimer.

The protein resides in the cytoplasm. The enzyme catalyses tRNA(Asp) + L-aspartate + ATP = L-aspartyl-tRNA(Asp) + AMP + diphosphate. Catalyzes the attachment of L-aspartate to tRNA(Asp) in a two-step reaction: L-aspartate is first activated by ATP to form Asp-AMP and then transferred to the acceptor end of tRNA(Asp). The chain is Aspartate--tRNA ligase from Haemophilus influenzae (strain PittEE).